An 89-amino-acid polypeptide reads, in one-letter code: Small ribosomal subunit protein bS20 (89 aa).

A disordered region spans residues Met-1–Arg-20.

The protein belongs to the bacterial ribosomal protein bS20 family.

Functionally, binds directly to 16S ribosomal RNA. The polypeptide is Small ribosomal subunit protein bS20 (Campylobacter curvus (strain 525.92)).